A 368-amino-acid chain; its full sequence is Nicotinate-nucleotide--dimethylbenzimidazole phosphoribosyltransferase (368 aa).

The active-site Proton acceptor is Glu-314. The segment at 344–368 (DRADGADNSADSGASAGTVASDPTV) is disordered. Over residues 349–360 (ADNSADSGASAG) the composition is skewed to low complexity.

This sequence belongs to the CobT family.

It catalyses the reaction 5,6-dimethylbenzimidazole + nicotinate beta-D-ribonucleotide = alpha-ribazole 5'-phosphate + nicotinate + H(+). It functions in the pathway nucleoside biosynthesis; alpha-ribazole biosynthesis; alpha-ribazole from 5,6-dimethylbenzimidazole: step 1/2. Functionally, catalyzes the synthesis of alpha-ribazole-5'-phosphate from nicotinate mononucleotide (NAMN) and 5,6-dimethylbenzimidazole (DMB). The chain is Nicotinate-nucleotide--dimethylbenzimidazole phosphoribosyltransferase from Corynebacterium efficiens (strain DSM 44549 / YS-314 / AJ 12310 / JCM 11189 / NBRC 100395).